The sequence spans 468 residues: Aldehyde dehydrogenase family 3 member B1 (468 aa).

An N-acetylmethionine modification is found at M1. Residue 188-193 (GSPRVG) coordinates NAD(+). Residues E210 and C244 contribute to the active site. The S-palmitoyl cysteine moiety is linked to residue C463. Position 465 is a cysteine methyl ester (C465). C465 is lipidated: S-geranylgeranyl cysteine. Positions 466-468 (TLL) are cleaved as a propeptide — removed in mature form.

This sequence belongs to the aldehyde dehydrogenase family. Post-translationally, dually lipidated in the C-terminus; prenylation occurs prior to, and is a prerequisite for palmitoylation. It is also required for activity towards long-chain substrates. As to expression, highest expression in kidney and lung.

The protein localises to the cell membrane. The enzyme catalyses an aldehyde + NADP(+) + H2O = a carboxylate + NADPH + 2 H(+). The catalysed reaction is an aldehyde + NAD(+) + H2O = a carboxylate + NADH + 2 H(+). It carries out the reaction a long-chain fatty aldehyde + NAD(+) + H2O = a long-chain fatty acid + NADH + 2 H(+). It catalyses the reaction a medium-chain fatty aldehyde + NAD(+) + H2O = a medium-chain fatty acid + NADH + 2 H(+). The enzyme catalyses octanal + NAD(+) + H2O = octanoate + NADH + 2 H(+). The catalysed reaction is nonanal + NAD(+) + H2O = nonanoate + NADH + 2 H(+). It carries out the reaction hexadecanoate + NADH + 2 H(+) = hexadecanal + NAD(+) + H2O. It catalyses the reaction (2E)-octenal + NAD(+) + H2O = (2E)-octenoate + NADH + 2 H(+). The enzyme catalyses (E)-non-2-enal + NAD(+) + H2O = (E)-non-2-enoate + NADH + 2 H(+). The catalysed reaction is (E)-4-hydroxynon-2-enal + NAD(+) + H2O = (E)-4-hydroxynon-2-enoate + NADH + 2 H(+). It carries out the reaction (2E)-hexadecenal + NAD(+) + H2O = (E)-hexadec-2-enoate + NADH + 2 H(+). It catalyses the reaction benzaldehyde + NAD(+) + H2O = benzoate + NADH + 2 H(+). The enzyme catalyses a medium-chain fatty aldehyde + NADP(+) + H2O = a medium-chain fatty acid + NADPH + 2 H(+). The catalysed reaction is hexanal + NADP(+) + H2O = hexanoate + NADPH + 2 H(+). It carries out the reaction octanal + NADP(+) + H2O = octanoate + NADPH + 2 H(+). It catalyses the reaction nonanal + NADP(+) + H2O = nonanoate + NADPH + 2 H(+). The enzyme catalyses (2E)-octenal + NADP(+) + H2O = (2E)-octenoate + NADPH + 2 H(+). The catalysed reaction is (E)-non-2-enal + NADP(+) + H2O = (E)-non-2-enoate + NADPH + 2 H(+). It carries out the reaction (E)-4-hydroxynon-2-enal + NADP(+) + H2O = (E)-4-hydroxynon-2-enoate + NADPH + 2 H(+). It catalyses the reaction benzaldehyde + NADP(+) + H2O = benzoate + NADPH + 2 H(+). Its pathway is alcohol metabolism; ethanol degradation; acetate from ethanol: step 2/2. Functionally, oxidizes medium and long chain saturated and unsaturated fatty aldehydes generated in the plasma membrane into non-toxic fatty acids. May have a protective role against the cytotoxicity induced by lipid peroxidation. Short-chain fatty aldehydes are not good substrates. Can use both NADP(+) and NAD(+) as electron acceptor in vitro, however in vivo preference will depend on their tissue levels. Low activity towards acetaldehyde and 3,4-dihydroxyphenylacetaldehyde. Able to metabolize aromatic aldehydes such as benzaldehyde to their acid form. This Homo sapiens (Human) protein is Aldehyde dehydrogenase family 3 member B1 (ALDH3B1).